Here is a 467-residue protein sequence, read N- to C-terminus: Putative alpha-amylase (467 aa).

E145 (nucleophile) is an active-site residue.

It belongs to the glycosyl hydrolase 57 family.

It catalyses the reaction Endohydrolysis of (1-&gt;4)-alpha-D-glucosidic linkages in polysaccharides containing three or more (1-&gt;4)-alpha-linked D-glucose units.. This chain is Putative alpha-amylase, found in Methanocaldococcus jannaschii (strain ATCC 43067 / DSM 2661 / JAL-1 / JCM 10045 / NBRC 100440) (Methanococcus jannaschii).